Consider the following 239-residue polypeptide: Pyridoxine 5'-phosphate synthase (239 aa).

Asparagine 7 contacts 3-amino-2-oxopropyl phosphate. Position 9–10 (9–10) interacts with 1-deoxy-D-xylulose 5-phosphate; that stretch reads DH. Arginine 18 is a binding site for 3-amino-2-oxopropyl phosphate. Catalysis depends on histidine 43, which acts as the Proton acceptor. 1-deoxy-D-xylulose 5-phosphate is bound by residues arginine 45 and histidine 50. Glutamate 70 (proton acceptor) is an active-site residue. Threonine 100 is a 1-deoxy-D-xylulose 5-phosphate binding site. The active-site Proton donor is histidine 191. Residues glycine 192 and 213–214 each bind 3-amino-2-oxopropyl phosphate; that span reads GH.

The protein belongs to the PNP synthase family. In terms of assembly, homooctamer; tetramer of dimers.

It localises to the cytoplasm. It carries out the reaction 3-amino-2-oxopropyl phosphate + 1-deoxy-D-xylulose 5-phosphate = pyridoxine 5'-phosphate + phosphate + 2 H2O + H(+). It participates in cofactor biosynthesis; pyridoxine 5'-phosphate biosynthesis; pyridoxine 5'-phosphate from D-erythrose 4-phosphate: step 5/5. Functionally, catalyzes the complicated ring closure reaction between the two acyclic compounds 1-deoxy-D-xylulose-5-phosphate (DXP) and 3-amino-2-oxopropyl phosphate (1-amino-acetone-3-phosphate or AAP) to form pyridoxine 5'-phosphate (PNP) and inorganic phosphate. This Trichormus variabilis (strain ATCC 29413 / PCC 7937) (Anabaena variabilis) protein is Pyridoxine 5'-phosphate synthase.